A 196-amino-acid polypeptide reads, in one-letter code: Potassium-transporting ATPase KdpC subunit (196 aa).

A helical membrane pass occupies residues 7-27 (PAIVSAGLFTVLLGLAYPLAV).

Belongs to the KdpC family. In terms of assembly, the system is composed of three essential subunits: KdpA, KdpB and KdpC.

It is found in the cell inner membrane. Part of the high-affinity ATP-driven potassium transport (or Kdp) system, which catalyzes the hydrolysis of ATP coupled with the electrogenic transport of potassium into the cytoplasm. This subunit acts as a catalytic chaperone that increases the ATP-binding affinity of the ATP-hydrolyzing subunit KdpB by the formation of a transient KdpB/KdpC/ATP ternary complex. This Caulobacter sp. (strain K31) protein is Potassium-transporting ATPase KdpC subunit.